A 210-amino-acid chain; its full sequence is Cell division protein SepF (210 aa).

2 stretches are compositionally biased toward low complexity: residues 36-47 (QQQQTPAAVPTQ) and 59-69 (RASATTATTAS). Disordered regions lie at residues 36-69 (QQQQTPAAVPTQEESRSNRRLRNRASATTATTAS) and 182-210 (NEMSQTQPRPRVPNSGSQVWQPEQIQMIQ).

This sequence belongs to the SepF family. In terms of assembly, homodimer. Interacts with FtsZ.

It localises to the cytoplasm. Its function is as follows. Cell division protein that is part of the divisome complex and is recruited early to the Z-ring. Probably stimulates Z-ring formation, perhaps through the cross-linking of FtsZ protofilaments. Its function overlaps with FtsA. This chain is Cell division protein SepF, found in Trichodesmium erythraeum (strain IMS101).